Consider the following 250-residue polypeptide: DNA polymerase sliding clamp (250 aa).

This sequence belongs to the PCNA family. As to quaternary structure, homotrimer. The subunits circularize to form a toroid; DNA passes through its center. Replication factor C (RFC) is required to load the toroid on the DNA.

Functionally, sliding clamp subunit that acts as a moving platform for DNA processing. Responsible for tethering the catalytic subunit of DNA polymerase and other proteins to DNA during high-speed replication. The protein is DNA polymerase sliding clamp of Methanococcus maripaludis (strain DSM 14266 / JCM 13030 / NBRC 101832 / S2 / LL).